We begin with the raw amino-acid sequence, 258 residues long: Type III pantothenate kinase (258 aa).

6–13 (DVGNTNTV) provides a ligand contact to ATP. Substrate-binding positions include Tyr100 and 107-110 (GADR). Residue Asp109 is the Proton acceptor of the active site. Asp129 is a K(+) binding site. Thr132 contacts ATP. A substrate-binding site is contributed by Thr184.

It belongs to the type III pantothenate kinase family. Homodimer. The cofactor is NH4(+). K(+) serves as cofactor.

It localises to the cytoplasm. It catalyses the reaction (R)-pantothenate + ATP = (R)-4'-phosphopantothenate + ADP + H(+). It functions in the pathway cofactor biosynthesis; coenzyme A biosynthesis; CoA from (R)-pantothenate: step 1/5. In terms of biological role, catalyzes the phosphorylation of pantothenate (Pan), the first step in CoA biosynthesis. This chain is Type III pantothenate kinase, found in Geobacillus sp. (strain WCH70).